The primary structure comprises 434 residues: uncharacterized protein (434 aa).

11 helical membrane passes run 50-70 (GSIA…SFTL), 72-92 (TGLL…VLAI), 95-115 (LMAF…LLPV), 135-155 (SPVV…QFGW), 158-178 (SLIA…YFPH), 179-199 (LNPE…IAIT), 229-249 (LPYI…KIFA), 288-308 (GFVP…VAGF), 319-339 (PNPM…VLLL), 376-396 (IFAA…AIYF), and 412-432 (VVAV…GLFV).

Its subcellular location is the cell membrane. This is an uncharacterized protein from Escherichia coli (strain K12).